The following is a 427-amino-acid chain: Enolase (427 aa).

Q162 contacts (2R)-2-phosphoglycerate. The active-site Proton donor is E206. 3 residues coordinate Mg(2+): D243, E286, and D313. The (2R)-2-phosphoglycerate site is built by K338, R367, S368, and K389. Residue K338 is the Proton acceptor of the active site.

The protein belongs to the enolase family. It depends on Mg(2+) as a cofactor.

It is found in the cytoplasm. Its subcellular location is the secreted. The protein resides in the cell surface. The catalysed reaction is (2R)-2-phosphoglycerate = phosphoenolpyruvate + H2O. It participates in carbohydrate degradation; glycolysis; pyruvate from D-glyceraldehyde 3-phosphate: step 4/5. In terms of biological role, catalyzes the reversible conversion of 2-phosphoglycerate (2-PG) into phosphoenolpyruvate (PEP). It is essential for the degradation of carbohydrates via glycolysis. This is Enolase from Methanopyrus kandleri (strain AV19 / DSM 6324 / JCM 9639 / NBRC 100938).